The primary structure comprises 378 residues: tRNA-specific 2-thiouridylase MnmA (378 aa).

ATP contacts are provided by residues 9-16 and methionine 35; that span reads GVSGGVDS. Positions 94–96 are interaction with target base in tRNA; the sequence is NPD. Cysteine 99 serves as the catalytic Nucleophile. A disulfide bond links cysteine 99 and cysteine 195. ATP is bound at residue glycine 123. The tract at residues 145 to 147 is interaction with tRNA; that stretch reads KDQ. Cysteine 195 (cysteine persulfide intermediate) is an active-site residue. The tract at residues 307 to 308 is interaction with tRNA; it reads RY.

This sequence belongs to the MnmA/TRMU family.

The protein resides in the cytoplasm. It catalyses the reaction S-sulfanyl-L-cysteinyl-[protein] + uridine(34) in tRNA + AH2 + ATP = 2-thiouridine(34) in tRNA + L-cysteinyl-[protein] + A + AMP + diphosphate + H(+). Its function is as follows. Catalyzes the 2-thiolation of uridine at the wobble position (U34) of tRNA, leading to the formation of s(2)U34. This is tRNA-specific 2-thiouridylase MnmA from Xanthomonas campestris pv. campestris (strain 8004).